The sequence spans 334 residues: Spermidine synthase 1 (334 aa).

Positions 1–16 (MDAKETSATDLKRPRE) are enriched in basic and acidic residues. The interval 1 to 35 (MDAKETSATDLKRPREEDDNGGAATMETENGDQKK) is disordered. One can recognise a PABS domain in the interval 45-282 (PGWFSEMSPM…GVIGFMLCST (238 aa)). Gln76 contributes to the S-adenosyl 3-(methylsulfanyl)propylamine binding site. Residue Tyr106 coordinates putrescine. S-adenosyl 3-(methylsulfanyl)propylamine contacts are provided by residues Gln107, Asp131, Glu151, 182–183 (DG), and Asp201. Residue Asp201 is the Proton acceptor of the active site. Residues 201-204 (DSSD) and Tyr270 each bind putrescine.

It belongs to the spermidine/spermine synthase family. As to quaternary structure, homotetramer and heterodimer. Component of a multiprotein complex. Interacts with SPMS and SPDSYN2.

The enzyme catalyses S-adenosyl 3-(methylsulfanyl)propylamine + putrescine = S-methyl-5'-thioadenosine + spermidine + H(+). The protein operates within amine and polyamine biosynthesis; spermidine biosynthesis; spermidine from putrescine: step 1/1. The sequence is that of Spermidine synthase 1 (SPDSYN1) from Arabidopsis thaliana (Mouse-ear cress).